The chain runs to 347 residues: MSPAPPPVDQWFRPFGVLRLSLTARCNLACPYCCPDSEELPGLMRLDQQVRLVRVACGLGVHTLRLTGGEPLLSDRLLPLLEALAAGRSNAADPLARLQEVALTTNGVLLTPEKALALRAAGLDRITVSLDALEGGVVATMAGLRGGQRAGERLVEQVLGGLSAARRAGFEPASGGLKLNAVMRRGLNDSQLLPLATLARERGVELRLIEYMDVGNRNGWAPDQVISAAEMVQRIDARWPLRPLPRESGATSRRWSYADGRGRIGTIASITEPFCGDCNRLRVTADGQAFTCLFASEGTDLRPFLHSEETLEAVVRGLWQQRRDRYSEERQGFTASAPHAEMAYLGG.

The Radical SAM core domain maps to 12–242 (FRPFGVLRLS…QRIDARWPLR (231 aa)). Arginine 19 contacts GTP. [4Fe-4S] cluster-binding residues include cysteine 26 and cysteine 30. An S-adenosyl-L-methionine-binding site is contributed by tyrosine 32. Position 33 (cysteine 33) interacts with [4Fe-4S] cluster. Arginine 65 is a binding site for GTP. Glycine 69 provides a ligand contact to S-adenosyl-L-methionine. Residue threonine 104 coordinates GTP. Position 129 (serine 129) interacts with S-adenosyl-L-methionine. Position 178 (lysine 178) interacts with GTP. Position 212 (methionine 212) interacts with S-adenosyl-L-methionine. Residues cysteine 275 and cysteine 278 each coordinate [4Fe-4S] cluster. GTP is bound at residue 280–282 (RLR). Cysteine 292 serves as a coordination point for [4Fe-4S] cluster.

It belongs to the radical SAM superfamily. MoaA family. In terms of assembly, monomer and homodimer. [4Fe-4S] cluster serves as cofactor.

It catalyses the reaction GTP + AH2 + S-adenosyl-L-methionine = (8S)-3',8-cyclo-7,8-dihydroguanosine 5'-triphosphate + 5'-deoxyadenosine + L-methionine + A + H(+). It participates in cofactor biosynthesis; molybdopterin biosynthesis. In terms of biological role, catalyzes the cyclization of GTP to (8S)-3',8-cyclo-7,8-dihydroguanosine 5'-triphosphate. This chain is GTP 3',8-cyclase, found in Synechococcus sp. (strain WH7803).